The chain runs to 635 residues: ATP-dependent zinc metalloprotease FtsH (635 aa).

The Cytoplasmic portion of the chain corresponds to M1–R6. A helical membrane pass occupies residues S7–S27. Residues D28–T103 lie on the Periplasmic side of the membrane. Residues F104–F124 traverse the membrane as a helical segment. Residues M125 to I635 lie on the Cytoplasmic side of the membrane. Residue G195–T202 coordinates ATP. Residue H417 coordinates Zn(2+). E418 is an active-site residue. Zn(2+) is bound by residues H421 and D495. The segment at S600–I635 is disordered. Residues K615–I635 are compositionally biased toward basic and acidic residues.

The protein in the central section; belongs to the AAA ATPase family. This sequence in the C-terminal section; belongs to the peptidase M41 family. In terms of assembly, homohexamer. Zn(2+) serves as cofactor.

It is found in the cell inner membrane. In terms of biological role, acts as a processive, ATP-dependent zinc metallopeptidase for both cytoplasmic and membrane proteins. Plays a role in the quality control of integral membrane proteins. In Rickettsia felis (strain ATCC VR-1525 / URRWXCal2) (Rickettsia azadi), this protein is ATP-dependent zinc metalloprotease FtsH.